We begin with the raw amino-acid sequence, 671 residues long: TOM1-like protein 6 (671 aa).

Ala-2 bears the N-acetylalanine mark. A VHS domain is found at 15–144 (ATSDLLLGPD…ELRRSGVEFP (130 aa)). Ser-147 is modified (phosphoserine). The 89-residue stretch at 229–317 (EVEGLSLSSI…LLAKHDAIAS (89 aa)) folds into the GAT domain. 2 disordered regions span residues 320-620 (PLPV…VGQK) and 636-671 (GSAD…RKMI). Residues 334–362 (ASKPADSSPKSSEAKDSSSIAGSSSPIPA) are compositionally biased toward low complexity. Residues 372-382 (DEEYEEEEDEF) show a composition bias toward acidic residues. Residues 395 to 405 (SVTTDPTSLES) are compositionally biased toward polar residues. Residues 407–417 (NAASNALALAL) are compositionally biased toward low complexity. Over residues 444-459 (STPPAPSSQPSPPPPA) the composition is skewed to pro residues. Positions 483–554 (AQQQQPQQPQ…QPSTRPQNPY (72 aa)) are enriched in low complexity. 2 stretches are compositionally biased toward polar residues: residues 562–598 (ASTS…NSFP) and 605–616 (QATSTASNSGVS). Ser-596 is modified (phosphoserine). Low complexity predominate over residues 647–663 (NSSNGSQNLSGSQTQQS).

This sequence belongs to the TOM1 family. Ubiquitously expressed.

Its subcellular location is the endosome. It localises to the multivesicular body. The protein resides in the cytoplasm. It is found in the early endosome membrane. In terms of biological role, acts as a gatekeeper for degradative protein sorting to the vacuole. Plays a role in recognition of ubiquitinated PIN2 auxin carrier at the plasma membrane and further to its endocytic sorting. Binds ubiquitin in vitro. Might contribute to the loading of the ESCRT machinery. The protein is TOM1-like protein 6 of Arabidopsis thaliana (Mouse-ear cress).